The following is a 917-amino-acid chain: MEPGLSGERRSMAPLLEYERQQVLELLDSDGLVVCARGLGTDRLLYHFLRLHCHPACLVLVLNTQPAEEEYFINQLKIEGVEHLPRRVTNEIASNSRYEVYTQGGIIFATSRILVVDFLTGRIPSDLITGILVYRAHRIIESCQEAFILRLFRQKNKRGFIKAFTDNAVAFDTGFCHVERVMRNLFVRKLYLWPRFHVAVNSFLEQHKPEVVEIHVSMTPAMLAIQTAILDILNACLKELKCHNPSLEVEDLSLENALGKPFDKTIRHYLDPLWHQLGAKTKSLVQDLKILRTLLQYLSQYDCVTFLNLLESLRATEKVFGQNSGWLFLDASTSMFVNARARVYRVPDVKLNKKAKTSEKTSSPEVQETKKELVLESNPKWEALTDVLKEIEAENKESEALGGPGRVLICASDDRTCCQLRDYLSAGAETFLLRLYRKTFEKDGKAEEVWVNVRKGDGPKRTTKSDKRPKAAPNKERASAKRGAPLKRKKQELTLTQVLGSAEEPPEDKALEEDLCRQTSSSPEGCGVEIKRESFDLNVSSDAAYGILKEPLTIIHPLLGCSDPYALTRVLHEVEPRYVVLYDAELTFVRQLEIYRASRPGKPLRVYFLIYGGSTEEQRYLTALRKEKEAFEKLIREKASMVVPEEREGRDETNLDLARGSAALDAPTDTRKAGGQEQNGTQSSIVVDMREFRSELPSLIHRRGIDIEPVTLEVGDYILTPELCVERKSVSDLIGSLHSGRLYSQCLAMSRYYRRPVLLIEFDPSKPFSLAPRGAFFQEMSSSDVSSKLTLLTLHFPRLRLLWCPSPHATAELFEELKQNKPQPDAATAMAITADSETLPESDRYNPGPQDFVLKMPGVNAKNCRSLMNQVKNIAELATLSLERLTTILGHSGNAKQLHDFLHTAYADLVSKGRVRK.

Positions 1–457 (MEPGLSGERR…EVWVNVRKGD (457 aa)) are helicase-like. Leucine-zipper regions lie at residues 233-254 (LNAC…DLSL) and 270-298 (LDPL…LQYL). Lysine 289 carries the N6-acetyllysine modification. The segment covering 454 to 479 (RKGDGPKRTTKSDKRPKAAPNKERAS) has biased composition (basic and acidic residues). Disordered stretches follow at residues 454–524 (RKGD…SSPE) and 643–681 (VPEE…QNGT). A Nuclear localization signal motif is present at residues 487–492 (KRKKQE). Over residues 507-516 (EDKALEEDLC) the composition is skewed to basic and acidic residues. Serine 522 carries the post-translational modification Phosphoserine. Over residues 643–653 (VPEEREGRDET) the composition is skewed to basic and acidic residues. The nuclease stretch occupies residues 659-814 (RGSAALDAPT…PSPHATAELF (156 aa)). Residues 684 to 764 (SIVVDMREFR…RPVLLIEFDP (81 aa)) enclose the ERCC4 domain. The residue at position 765 (serine 765) is a Phosphoserine. Positions 838–906 (TLPESDRYNP…QLHDFLHTAY (69 aa)) are hhH2, dimerization with ERCC1. Lysine 912 carries the post-translational modification N6-acetyllysine.

This sequence belongs to the XPF family. Heterodimer composed of ERCC1 and ERCC4/XPF. Interacts with SLX4/BTBD12; this interaction is direct and links the ERCC1-ERCC4/XPF complex to SLX4, which may coordinate the action of the structure-specific endonuclease during DNA repair. The cofactor is Mg(2+). In terms of processing, acetylation at Lys-912 by KAT5 promotes interaction with ERCC1 by disrupting a salt bridge between Asp-908 and Lys-912, thereby exposing a second binding site for ERCC1. Deacetylated by SIRT1.

Its subcellular location is the nucleus. The protein localises to the chromosome. Functionally, catalytic component of a structure-specific DNA repair endonuclease responsible for the 5-prime incision during DNA repair, and which is essential for nucleotide excision repair (NER) and interstrand cross-link (ICL) repair. The protein is DNA repair endonuclease XPF of Mus musculus (Mouse).